The primary structure comprises 500 residues: NAD(P)H-quinone oxidoreductase chain 4, chloroplastic (500 aa).

14 helical membrane-spanning segments follow: residues 4 to 24, 37 to 57, 84 to 104, 111 to 129, 134 to 154, 167 to 187, 208 to 228, 242 to 262, 272 to 292, 305 to 325, 330 to 350, 374 to 396, 416 to 436, and 462 to 482; these read FPWL…IFFF, ICIC…HFQL, GLSI…TLAA, SRLF…IGSF, LLLF…LLSM, FILY…GMGL, ALEI…SPII, HYST…YGLV, AHSI…IYAA, IAYS…SITD, GAIL…FLAG, IFTM…GFVA, ILIT…SLSM, and LFVS…PDFV.

This sequence belongs to the complex I subunit 4 family.

It is found in the plastid. The protein resides in the chloroplast thylakoid membrane. It carries out the reaction a plastoquinone + NADH + (n+1) H(+)(in) = a plastoquinol + NAD(+) + n H(+)(out). The enzyme catalyses a plastoquinone + NADPH + (n+1) H(+)(in) = a plastoquinol + NADP(+) + n H(+)(out). The chain is NAD(P)H-quinone oxidoreductase chain 4, chloroplastic from Liriodendron tulipifera (Tuliptree).